A 193-amino-acid chain; its full sequence is NADH-quinone oxidoreductase subunit B (193 aa).

The tract at residues 1–25 (MGLNDSSGTLVAPKPKGIIDPNTGR) is disordered. Residues Cys72, Cys73, Cys137, and Cys167 each contribute to the [4Fe-4S] cluster site.

Belongs to the complex I 20 kDa subunit family. As to quaternary structure, NDH-1 is composed of 14 different subunits. Subunits NuoB, C, D, E, F, and G constitute the peripheral sector of the complex. [4Fe-4S] cluster serves as cofactor.

Its subcellular location is the cell inner membrane. The catalysed reaction is a quinone + NADH + 5 H(+)(in) = a quinol + NAD(+) + 4 H(+)(out). Its function is as follows. NDH-1 shuttles electrons from NADH, via FMN and iron-sulfur (Fe-S) centers, to quinones in the respiratory chain. Couples the redox reaction to proton translocation (for every two electrons transferred, four hydrogen ions are translocated across the cytoplasmic membrane), and thus conserves the redox energy in a proton gradient. This chain is NADH-quinone oxidoreductase subunit B, found in Mesorhizobium japonicum (strain LMG 29417 / CECT 9101 / MAFF 303099) (Mesorhizobium loti (strain MAFF 303099)).